Consider the following 646-residue polypeptide: Type III restriction-modification enzyme EcoPI Mod subunit (646 aa).

Positions 123 to 126 (DPPY) are binding of S-adenosyl methionine.

It belongs to the N(4)/N(6)-methyltransferase family. Homodimer. A heterotetramer with stoichiometry Res(2)Mod(2).

The catalysed reaction is a 2'-deoxyadenosine in DNA + S-adenosyl-L-methionine = an N(6)-methyl-2'-deoxyadenosine in DNA + S-adenosyl-L-homocysteine + H(+). Functionally, a beta subtype methylase that binds the system-specific DNA recognition site 5'-AGACC-3' and methylates A-3 (of only 1 strand as the other does not have an A residue). DNA restriction requires both the Res and Mod subunits. The sequence is that of Type III restriction-modification enzyme EcoPI Mod subunit from Enterobacteriaceae (Bacteriophage P1).